The primary structure comprises 175 residues: Nucleoside-triphosphatase THEP1 (175 aa).

Residues Gly15–Thr22 and Val106–Gly113 each bind ATP.

This sequence belongs to the THEP1 NTPase family.

It catalyses the reaction a ribonucleoside 5'-triphosphate + H2O = a ribonucleoside 5'-diphosphate + phosphate + H(+). In terms of biological role, has nucleotide phosphatase activity towards ATP, GTP, CTP, TTP and UTP. May hydrolyze nucleoside diphosphates with lower efficiency. This is Nucleoside-triphosphatase THEP1 from Saccharolobus solfataricus (strain ATCC 35092 / DSM 1617 / JCM 11322 / P2) (Sulfolobus solfataricus).